The chain runs to 1288 residues: MNSVRQSCRPKHQVLILKCYPRFQKGVQSVKPNSSELSYLLYYASTRRSKLQKVGAFLEKRAARDVWRGKLGNVQVTLQILAALIEKVPRDLPLYARSILTVLDIVLRSREISMVEETIPTFELFCRHQDSATLTADHEYIIQYRELVGTYASFASTETPVTTKTPMSAPMALRWRTVGLKAIKSIVTSEILSTDGAKQLNVVIPVILQNLYASGDHRLSPLQEKAKSSERLEREQFRRRRMSISTVQTVDTIDGNGDPESASGSAADADMMAEMEARVLALRCLEKVFSGTNRVQIRFATSLVLSFIVSRRPPRTQEKQRSANGKTDGNWATNLLEVIANWSPVQDRFIILVTLLETLVERPLVDGQLEPQLTLASMMDWLLGSSVNLIGLSVMDVLIGLLQFVRQLLQLGNGTQTLVPHHGLSTLIKPLPQMDETAATNSQTNGENEKAPTADSLRHELLELLENCIGNLATHVYYGDQVSDMIRTIVIRIKPSPALEGENAHHESESDNAIQKSSPSRSDYTAESYFSSSAARITALRSVKDILVVANLRKSTSGTDPDARNRVPLHVWEGTHWLLQDPQWEVRNAYVDAFLSWLQLETKKSDLRVPTEHTRVSKMGNRRDTSDIPERLARRIVSTAPQEENVAACHASSFLQLLHLTIFDVVSESSTTESDILRLYLLLVNLVEHLGVNAARYTLPVLMKLQDTLPSSVSASKALHIGSLVHGYLLALVEKFDLEGTRPAAEIINEISKRKKRGVWLDKIQLPPRPLHHIQPSLDTVIEQASLPQPDKNIYSRFTSLEELVRQIESTYNSSYVSPPISPSNSPGRSFSIPSLGLNNSTNPHVPAGSQLPLHVKEHMLAPWSKEACLDAIEKEKAKTSSLSGSRTATGAFAAGLNALNMSAYNSGPGSPTGTAPSASNRQDRPVSAAYAPTGNLAGFQKTRRQSIPERRVSPAASSRDSTVRVNELRRVLSVINSSNVRHPSPLRGRHRVDSTVSSTESMVSDNLSFSDAGTAAADRPLSSRENLTAPRGLNRYHGGPNQLHGDFEPEYIPPVPPLPSSLAIPGGFPADSRSGSSVTSPSHSPPRSDRPSTAPGRPARTHSKSKGSNASTLRQSRSLSRKKSLDTSLHERSERRATDLNGIPSGHSHGYSEDLGDIGIAITADTTEIAPHTQDRADTSSQWSRREASRTLSFGRRVDMDKLLEGLSAPNDDQQPNGTGEVSGIKIASSGVEGSSSLTRMGKKPSFQSMNDEKKASYSRKTSLLSPGAAPWNRLSSDRGGIGPPPY.

Disordered regions lie at residues 500–522 (EGEN…PSRS), 816–835 (YVSP…SIPS), 906–964 (NSGP…DSTV), 980–1155 (NVRH…YSED), 1167–1195 (TTEI…TLSF), and 1208–1288 (LSAP…PPPY). Positions 511–522 (DNAIQKSSPSRS) are enriched in polar residues. 2 stretches are compositionally biased toward polar residues: residues 906-921 (NSGP…SASN) and 995-1012 (STVS…SFSD). The span at 1073 to 1083 (SRSGSSVTSPS) shows a compositional bias: low complexity. Basic and acidic residues-rich tracts occupy residues 1124–1139 (KSLD…RRAT) and 1174–1190 (TQDR…REAS). A compositionally biased stretch (polar residues) spans 1212-1221 (NDDQQPNGTG).

It belongs to the EFR3 family.

The sequence is that of Protein EFR3 (EFR3) from Coccidioides immitis (strain RS) (Valley fever fungus).